The chain runs to 382 residues: Apolipoprotein A-IV (382 aa).

The first 20 residues, 1–20 (MFLKAVVLSLALVAVTGARA), serve as a signal peptide directing secretion. 13 consecutive repeat copies span residues 33 to 54 (DYFS…KSEL), 60 to 81 (TLFQ…KKLV), 82 to 103 (PFAT…EEIR), 115 to 136 (PHAT…QRLG), 137 to 158 (PFTG…RQLK), 159 to 180 (PYAE…ASVA), 181 to 202 (PYAD…GSLT), 203 to 224 (PYAE…RSLA), 225 to 246 (PYAQ…FQMK), 247 to 268 (KQAE…QKLV), 269 to 286 (PVAE…EGLQ), 287 to 308 (KSLL…LKVE), and 309 to 330 (PYGE…QKLG). The segment at 33–330 (DYFSQLGSNA…QVEDLRQKLG (298 aa)) is 13 X 22 AA approximate tandem repeats. The interval 361-382 (EASQGQSQALPAQEKAQAPLEG) is disordered.

Belongs to the apolipoprotein A1/A4/E family. Homodimer. Secreted in plasma.

The protein localises to the secreted. In terms of biological role, may have a role in chylomicrons and VLDL secretion and catabolism. Required for efficient activation of lipoprotein lipase by ApoC-II; potent activator of LCAT. Apoa-IV is a major component of HDL and chylomicrons. This Sus scrofa (Pig) protein is Apolipoprotein A-IV (APOA4).